The sequence spans 158 residues: SsrA-binding protein (158 aa).

Positions 133-158 (QLHDKRETEKKRDWNKEKGRLLRDKH) are disordered.

Belongs to the SmpB family.

The protein resides in the cytoplasm. In terms of biological role, required for rescue of stalled ribosomes mediated by trans-translation. Binds to transfer-messenger RNA (tmRNA), required for stable association of tmRNA with ribosomes. tmRNA and SmpB together mimic tRNA shape, replacing the anticodon stem-loop with SmpB. tmRNA is encoded by the ssrA gene; the 2 termini fold to resemble tRNA(Ala) and it encodes a 'tag peptide', a short internal open reading frame. During trans-translation Ala-aminoacylated tmRNA acts like a tRNA, entering the A-site of stalled ribosomes, displacing the stalled mRNA. The ribosome then switches to translate the ORF on the tmRNA; the nascent peptide is terminated with the 'tag peptide' encoded by the tmRNA and targeted for degradation. The ribosome is freed to recommence translation, which seems to be the essential function of trans-translation. This chain is SsrA-binding protein, found in Beijerinckia indica subsp. indica (strain ATCC 9039 / DSM 1715 / NCIMB 8712).